The following is a 963-amino-acid chain: Reversion-inducing cysteine-rich protein with Kazal motifs (963 aa).

The N-terminal stretch at 1 to 28 (MAAAVAAWPWALFCLAAVPPLLSPGAAG) is a signal peptide. One copy of the Knot 1 repeat lies at 31–78 (CCYHAKDNLMCRDVCEQILSSKSDSRLKHLLQRAPEYCPESMGEVWGC). The 5 X Knot repeats stretch occupies residues 31–332 (CCYHAKDNLM…NAVEVSMLTC (302 aa)). The N-linked (GlcNAc...) asparagine glycan is linked to N80. Knot repeat units follow at residues 98-135 (CCELAIAVECRQACKQASSKNDILKVCRKEYENALFSC) and 145-191 (CCSY…LIHC). An N-linked (GlcNAc...) asparagine glycan is attached at N194. Knot repeat units follow at residues 210 to 257 (CCDR…LWQC) and 286 to 332 (CCSK…MLTC). Residues N291 and N346 are each glycosylated (N-linked (GlcNAc...) asparagine). 3 consecutive Kazal-like domains span residues 621-667 (KFTG…SCIS), 692-746 (SFGK…PCQP), and 749-783 (KSVEPVCGHNGETYSSVCAAYSDRVAVDYYGHCQA). Disulfide bonds link C627-C652, C629-C648, C637-C665, C710-C729, C718-C744, and C755-C781. Residue S936 is the site of GPI-anchor amidated serine attachment. Positions 937-963 (PSVKVGPVLHCLFISFSFTLLKLMDYI) are excised as a propeptide.

Belongs to the RECK family. As to quaternary structure, interacts (via knot repeats) with WNT7A (via disordered linker region); the interaction is direct. Interacts (via knot repeats) with WNT7B (via disordered linker region); the interaction is direct. Interacts with ADGRA2; the interaction is direct. In terms of processing, localizes to the plasma membrane via its GPI-anchor. Released from the plasma membrane following cleavage of the GPI-anchor by GDPD5/GPE2.

Its subcellular location is the cell membrane. Its function is as follows. Functions together with ADGRA2 to enable brain endothelial cells to selectively respond to Wnt7 signals (WNT7A or WNT7B). Plays a key role in Wnt7-specific responses: required for central nervous system (CNS) angiogenesis and blood-brain barrier regulation. Acts as a Wnt7-specific coactivator of canonical Wnt signaling by decoding Wnt ligands: acts by interacting specifically with the disordered linker region of Wnt7, thereby conferring ligand selectivity for Wnt7. ADGRA2 is then required to deliver RECK-bound Wnt7 to frizzled by assembling a higher-order RECK-ADGRA2-Fzd-LRP5-LRP6 complex. Also acts as a serine protease inhibitor. The protein is Reversion-inducing cysteine-rich protein with Kazal motifs of Gallus gallus (Chicken).